The following is a 333-amino-acid chain: Electron transfer flavoprotein subunit alpha, mitochondrial (333 aa).

Residues 1 to 19 (MFRAAAPGQLRRAASLLRF) constitute a mitochondrion transit peptide. Positions 20-204 (QSTLVIAEHA…EISEWLDQKL (185 aa)) are domain I. The residue at position 59 (lysine 59) is an N6-acetyllysine; alternate. Lysine 59 carries the post-translational modification N6-succinyllysine; alternate. Lysine 62 carries the post-translational modification N6-acetyllysine. Lysine 69 bears the N6-acetyllysine; alternate mark. Residue lysine 69 is modified to N6-succinyllysine; alternate. Lysine 75 carries the N6-acetyllysine modification. The residue at position 85 (lysine 85) is an N6-acetyllysine; alternate. Position 85 is an N6-succinyllysine; alternate (lysine 85). Threonine 93 carries the post-translational modification Phosphothreonine. N6-acetyllysine is present on residues lysine 101 and lysine 139. Position 140 is a phosphoserine (serine 140). At lysine 158 the chain carries N6-acetyllysine; alternate. Lysine 158 is subject to N6-succinyllysine; alternate. An N6-acetyllysine modification is found at lysine 164. Lysine 187 carries the N6-succinyllysine modification. Lysine 203 carries the post-translational modification N6-acetyllysine; alternate. Residue lysine 203 is modified to N6-succinyllysine; alternate. Residues 205 to 333 (TKSDRPELTG…PEMTEILKKK (129 aa)) are domain II. Lysine 216 bears the N6-succinyllysine mark. Residue arginine 223 coordinates FAD. An N6-acetyllysine; alternate mark is found at lysine 226 and lysine 232. 2 positions are modified to N6-succinyllysine; alternate: lysine 226 and lysine 232. FAD-binding positions include serine 248, 263-266 (VGQT), 281-286 (SGAIQH), and asparagine 300. Lysine 301 carries the N6-succinyllysine modification. Position 318-319 (318-319 (DL)) interacts with FAD.

Belongs to the ETF alpha-subunit/FixB family. In terms of assembly, heterodimer composed of ETFA and ETFB. Identified in a complex that contains ETFA, ETFB and ETFRF1. Interaction with ETFRF1 promotes dissociation of the bound FAD and loss of electron transfer activity. Interacts with TASOR. FAD is required as a cofactor. Post-translationally, the N-terminus is blocked.

Its subcellular location is the mitochondrion matrix. Heterodimeric electron transfer flavoprotein that accepts electrons from several mitochondrial dehydrogenases, including acyl-CoA dehydrogenases, glutaryl-CoA and sarcosine dehydrogenase. It transfers the electrons to the main mitochondrial respiratory chain via ETF-ubiquinone oxidoreductase (ETF dehydrogenase). Required for normal mitochondrial fatty acid oxidation and normal amino acid metabolism. This Homo sapiens (Human) protein is Electron transfer flavoprotein subunit alpha, mitochondrial (ETFA).